A 353-amino-acid polypeptide reads, in one-letter code: Quinolinate synthase (353 aa).

Positions 47 and 68 each coordinate iminosuccinate. Cys-113 lines the [4Fe-4S] cluster pocket. Residues 139–141 and Ser-156 each bind iminosuccinate; that span reads YAN. Cys-200 provides a ligand contact to [4Fe-4S] cluster. Residues 226–228 and Thr-243 contribute to the iminosuccinate site; that span reads HPE. Cys-297 is a binding site for [4Fe-4S] cluster.

The protein belongs to the quinolinate synthase family. Type 1 subfamily. The cofactor is [4Fe-4S] cluster.

It is found in the cytoplasm. It carries out the reaction iminosuccinate + dihydroxyacetone phosphate = quinolinate + phosphate + 2 H2O + H(+). The protein operates within cofactor biosynthesis; NAD(+) biosynthesis; quinolinate from iminoaspartate: step 1/1. Catalyzes the condensation of iminoaspartate with dihydroxyacetone phosphate to form quinolinate. The chain is Quinolinate synthase from Vibrio vulnificus (strain CMCP6).